The following is a 529-amino-acid chain: Na(+)/H(+) antiporter NhaB (529 aa).

A run of 12 helical transmembrane segments spans residues 13–33, 34–54, 90–110, 113–133, 136–156, 205–225, 241–261, 306–326, 327–347, 351–371, 451–471, and 479–499; these read FLGK…IINP, IVFF…EFIF, LVAN…IYFM, LLLF…ILSL, CFAA…AVVI, LLMH…VGEP, FLIR…LTCF, GLIA…VGLI, GLSV…HSLG, EEAL…AVII, ATPN…APLI, and VIMA…GIVF.

It belongs to the NhaB Na(+)/H(+) (TC 2.A.34) antiporter family.

The protein resides in the cell inner membrane. It catalyses the reaction 2 Na(+)(in) + 3 H(+)(out) = 2 Na(+)(out) + 3 H(+)(in). Its function is as follows. Na(+)/H(+) antiporter that extrudes sodium in exchange for external protons. The chain is Na(+)/H(+) antiporter NhaB from Vibrio vulnificus (strain CMCP6).